A 200-amino-acid chain; its full sequence is NADH-quinone oxidoreductase subunit C (200 aa).

The protein belongs to the complex I 30 kDa subunit family. In terms of assembly, NDH-1 is composed of 14 different subunits. Subunits NuoB, C, D, E, F, and G constitute the peripheral sector of the complex.

The protein localises to the cell inner membrane. The enzyme catalyses a quinone + NADH + 5 H(+)(in) = a quinol + NAD(+) + 4 H(+)(out). Its function is as follows. NDH-1 shuttles electrons from NADH, via FMN and iron-sulfur (Fe-S) centers, to quinones in the respiratory chain. The immediate electron acceptor for the enzyme in this species is believed to be ubiquinone. Couples the redox reaction to proton translocation (for every two electrons transferred, four hydrogen ions are translocated across the cytoplasmic membrane), and thus conserves the redox energy in a proton gradient. The polypeptide is NADH-quinone oxidoreductase subunit C (Agrobacterium fabrum (strain C58 / ATCC 33970) (Agrobacterium tumefaciens (strain C58))).